A 737-amino-acid polypeptide reads, in one-letter code: MRKPRVTAATSGPDGLAPASDVAAIVAGTHGDPFAVLGVHEVGKGLFARCFVPHAETVTAYTLTGIEAGALSRRDDAGFFEGKLSIKKRQPLRYHAHNAGGDWWLTDPYSFGPVLGPMDDYYIAEGSHLRLFDKLGAHVIEHEGATGVHFAVWAPNAKRVSVVGDFNDWDGRRHTMRDRRDTGIWEVFIPDIGAGRPYKYEIIGPDGVRLPLKADPFAFKSELRPATASVVAVPPAHDWGDEAHRNYWRNADPRREAVSIYEVHAGSWQLHDDGTFLSWDELADRLIPYVVETGFTHIEFMPISEHPYDPSWGYQTTGLYAPSARFGDPDGFARFVDGAHRAGVGVILDWVPAHFPVDAHGLAHFDGTALYEHADPRKGFHPDWNTAIYNFGRREVVSFLVNNALFWAEKYHVDGLRVDAVASMLYLDYSRKAGEWIPNEKGGRENLEAVSFLQKMNKEVYGHHPGVMTIAEESTSWPKVSAPVHEGGLGFGFKWNMGFMHDTLEYFSKEPIFRKHHHNDLTFGLTYAFSENFVLPLSHDEVVHGKGTLLSKMAGDDWQKFATLRAYYGFMWGYPGKKLLFMGQEFAQRREWSEARALDWNLLDFRPHRGVWQTVRDLNYLYRSRPALHGRDCEPEGFSWLIVDDSQNSVFAWVRNAPGGSPVAVISNFTPVPRDNYRVPLPKAGKWREIINTDASEYGGSGMGNGGMVEARAEGKNISATMLLPPLSTIMLELVAD.

The Nucleophile role is filled by D419. Catalysis depends on E472, which acts as the Proton donor.

Belongs to the glycosyl hydrolase 13 family. GlgB subfamily. In terms of assembly, monomer.

It catalyses the reaction Transfers a segment of a (1-&gt;4)-alpha-D-glucan chain to a primary hydroxy group in a similar glucan chain.. It functions in the pathway glycan biosynthesis; glycogen biosynthesis. Catalyzes the formation of the alpha-1,6-glucosidic linkages in glycogen by scission of a 1,4-alpha-linked oligosaccharide from growing alpha-1,4-glucan chains and the subsequent attachment of the oligosaccharide to the alpha-1,6 position. The protein is 1,4-alpha-glucan branching enzyme GlgB of Mesorhizobium japonicum (strain LMG 29417 / CECT 9101 / MAFF 303099) (Mesorhizobium loti (strain MAFF 303099)).